The chain runs to 60 residues: Large ribosomal subunit protein bL32 (60 aa).

The tract at residues 1–46 (MAVQQNKKSPSKRGMHRSHNALNTPGTAIEPTTGEVHLRHHISPTG) is disordered. Over residues 9 to 19 (SPSKRGMHRSH) the composition is skewed to basic residues.

It belongs to the bacterial ribosomal protein bL32 family.

The chain is Large ribosomal subunit protein bL32 from Leptothrix cholodnii (strain ATCC 51168 / LMG 8142 / SP-6) (Leptothrix discophora (strain SP-6)).